Here is an 89-residue protein sequence, read N- to C-terminus: Putative sodium channel toxin Ts30 (89 aa).

Positions 1 to 17 (MFKLAIILALLFFGARA) are cleaved as a signal peptide. The region spanning 21–85 (RDGYPILSDG…FGDSGTPECH (65 aa)) is the LCN-type CS-alpha/beta domain. 4 disulfides stabilise this stretch: C31–C84, C35–C59, C44–C64, and C48–C66.

Expressed by the venom gland.

Its subcellular location is the secreted. The chain is Putative sodium channel toxin Ts30 from Tityus serrulatus (Brazilian scorpion).